A 504-amino-acid chain; its full sequence is MWWFRRRDRAPLRATSSLSLRWRVMLLAMSMVAMVVVLMSFAVYAVISAALYSDIDNQLQSRAQLLIASGSLAADPGKAIEGTAYSDVNAMLVNPGQSIYTAQQPGQTLPVGAAEKAVIRGELFMSRRTTADQRVLAIRLTNGSSLLISKSLKPTEAVMNKLRWVLLIVGGIGVAVAAVAGGMVTRAGLRPVGRLTEAAERVARTDDLRPIPVFGSDELARLTEAFNLMLRALAESRERQARLVTDAGHELRTPLTSLRTNVELLMASMAPGAPRLPKQEMVDLRADVLAQIEELSTLVGDLVDLSRGDAGEVVHEPVDMADVVDRSLERVRRRRNDIHFDVEVIGWQVYGDTAGLSRMALNLMDNAAKWSPPGGHVGVRLSQLDASHAELVVSDRGPGIPVQERRLVFERFYRSASARALPGSGLGLAIVKQVVLNHGGLLRIEDTDPGGQPPGTSIYVLLPGRRMPIPQLPGATAGARSTDIENSRGSANVISVESQSTRAT.

Residues 1–26 are Cytoplasmic-facing; that stretch reads MWWFRRRDRAPLRATSSLSLRWRVML. The chain crosses the membrane as a helical span at residues 27–47; the sequence is LAMSMVAMVVVLMSFAVYAVI. Residues 48 to 163 are Extracellular-facing; it reads SAALYSDIDN…PTEAVMNKLR (116 aa). The chain crosses the membrane as a helical span at residues 164-184; the sequence is WVLLIVGGIGVAVAAVAGGMV. The Cytoplasmic portion of the chain corresponds to 185–504; sequence TRAGLRPVGR…SVESQSTRAT (320 aa). The region spanning 186 to 238 is the HAMP domain; it reads RAGLRPVGRLTEAAERVARTDDLRPIPVFGSDELARLTEAFNLMLRALAESRE. Positions 246–466 constitute a Histidine kinase domain; it reads DAGHELRTPL…SIYVLLPGRR (221 aa). Residue H249 is modified to Phosphohistidine; by autocatalysis. Positions 471–504 are disordered; sequence QLPGATAGARSTDIENSRGSANVISVESQSTRAT. Residues 487–504 show a composition bias toward polar residues; that stretch reads SRGSANVISVESQSTRAT.

Mg(2+) is required as a cofactor. The cofactor is Mn(2+). Autophosphorylated.

Its subcellular location is the cell membrane. The catalysed reaction is ATP + protein L-histidine = ADP + protein N-phospho-L-histidine.. Member of the two-component regulatory system MprB/MprA which contributes to maintaining a balance among several systems involved in stress resistance and is required for establishment and maintenance of persistent infection in the host. In response to environmental signals MprB acts both as a membrane-associated protein kinase that undergoes autophosphorylation and subsequently transfers the phosphate to MprA, and a protein phosphatase that dephosphorylates phospho-MprA. MprB/MprA up-regulates expression of mprA and pepD. This chain is Signal transduction histidine-protein kinase/phosphatase MprB (mprB), found in Mycobacterium bovis (strain ATCC BAA-935 / AF2122/97).